The following is a 248-amino-acid chain: 2,3-bisphosphoglycerate-dependent phosphoglycerate mutase (248 aa).

Residues 8–15 (RHGESEWN), 21–22 (TG), arginine 60, 87–90 (ERHY), lysine 98, 114–115 (RR), and 183–184 (GN) each bind substrate. The Tele-phosphohistidine intermediate role is filled by histidine 9. Residue glutamate 87 is the Proton donor/acceptor of the active site.

The protein belongs to the phosphoglycerate mutase family. BPG-dependent PGAM subfamily.

The enzyme catalyses (2R)-2-phosphoglycerate = (2R)-3-phosphoglycerate. Its pathway is carbohydrate degradation; glycolysis; pyruvate from D-glyceraldehyde 3-phosphate: step 3/5. Catalyzes the interconversion of 2-phosphoglycerate and 3-phosphoglycerate. This is 2,3-bisphosphoglycerate-dependent phosphoglycerate mutase from Borrelia hermsii (strain HS1 / DAH).